The sequence spans 197 residues: Holliday junction branch migration complex subunit RuvA (197 aa).

The interval 1 to 64 (MYEYIKGTYM…EDFIGLYGFG (64 aa)) is domain I. The tract at residues 65-143 (SKEELELFNK…VNLDEGIQTD (79 aa)) is domain II. The interval 144 to 149 (SNDIKV) is flexible linker. Residues 149-197 (VSSKILEEAKEALMSLGYSEKECEKALKNVEEKESLEIIIKESLKFLMN) form a domain III region.

The protein belongs to the RuvA family. As to quaternary structure, homotetramer. Forms an RuvA(8)-RuvB(12)-Holliday junction (HJ) complex. HJ DNA is sandwiched between 2 RuvA tetramers; dsDNA enters through RuvA and exits via RuvB. An RuvB hexamer assembles on each DNA strand where it exits the tetramer. Each RuvB hexamer is contacted by two RuvA subunits (via domain III) on 2 adjacent RuvB subunits; this complex drives branch migration. In the full resolvosome a probable DNA-RuvA(4)-RuvB(12)-RuvC(2) complex forms which resolves the HJ.

The protein resides in the cytoplasm. Its function is as follows. The RuvA-RuvB-RuvC complex processes Holliday junction (HJ) DNA during genetic recombination and DNA repair, while the RuvA-RuvB complex plays an important role in the rescue of blocked DNA replication forks via replication fork reversal (RFR). RuvA specifically binds to HJ cruciform DNA, conferring on it an open structure. The RuvB hexamer acts as an ATP-dependent pump, pulling dsDNA into and through the RuvAB complex. HJ branch migration allows RuvC to scan DNA until it finds its consensus sequence, where it cleaves and resolves the cruciform DNA. The chain is Holliday junction branch migration complex subunit RuvA from Hathewaya histolytica (Clostridium histolyticum).